The chain runs to 198 residues: MSTHLLEQLIDAFRILPGVGQKTAQRMAYHMLEREREGGQRLADVLSRAIEKIGHCTECRDFSETKICAICANSSRDRHQLCVVESPPDRLAIEQATGYRGLYFILQGRLSPLDGIGPHELGLDHLGQRLAAGEVTELIIATNATVEGETTAHYLALLARQHGIRPSRLAQGLPLGGELEYLDRGTLSHAFGTRTEVV.

A C4-type zinc finger spans residues 56-71 (CTECRDFSETKICAIC). One can recognise a Toprim domain in the interval 79 to 174 (HQLCVVESPP…RPSRLAQGLP (96 aa)).

Belongs to the RecR family.

Its function is as follows. May play a role in DNA repair. It seems to be involved in an RecBC-independent recombinational process of DNA repair. It may act with RecF and RecO. The protein is Recombination protein RecR of Xylella fastidiosa (strain Temecula1 / ATCC 700964).